The primary structure comprises 53 residues: Sodium/potassium-transporting ATPase subunit gamma (53 aa).

Residues 16 to 34 (GGLIFAALAFIVGLVIILS) form a helical membrane-spanning segment.

This sequence belongs to the FXYD family. Regulatory subunit of the sodium/potassium-transporting ATPase which is composed of a catalytic alpha subunit, an auxiliary non-catalytic beta subunit and an additional regulatory subunit. Post-translationally, the N-terminus is blocked. Highest levels expressed in the kidney and spleen. Restricted to the basolateral membrane in renal epithelial cells and varies in its level of expression along the nephron.

Its subcellular location is the membrane. Its function is as follows. May be involved in forming the receptor site for cardiac glycoside binding or may modulate the transport function of the sodium ATPase. This chain is Sodium/potassium-transporting ATPase subunit gamma (FXYD2), found in Ovis aries (Sheep).